The primary structure comprises 461 residues: Carbamoyl phosphate synthase arginine-specific small chain (461 aa).

Residues 240-427 form the Glutamine amidotransferase type-1 domain; sequence HVALIDCGVK…LENVQMYKDN (188 aa). Cysteine 316 (nucleophile) is an active-site residue. Active-site residues include histidine 400 and glutamate 402.

This sequence belongs to the CarA family. Heterodimer composed of 2 chains; the small (or glutamine) chain promotes the hydrolysis of glutamine to ammonia, which is used by the large (or ammonia) chain to synthesize carbamoyl phosphate.

The protein resides in the cytoplasm. The enzyme catalyses hydrogencarbonate + L-glutamine + 2 ATP + H2O = carbamoyl phosphate + L-glutamate + 2 ADP + phosphate + 2 H(+). It catalyses the reaction L-glutamine + H2O = L-glutamate + NH4(+). The protein operates within amino-acid biosynthesis; L-arginine biosynthesis; carbamoyl phosphate from bicarbonate: step 1/1. In terms of biological role, small subunit of the arginine-specific carbamoyl phosphate synthase (CPSase). CPSase catalyzes the formation of carbamoyl phosphate from the ammonia moiety of glutamine, carbonate, and phosphate donated by ATP, constituting the first step of 2 biosynthetic pathways, one leading to arginine and/or urea and the other to pyrimidine nucleotides. The small subunit (glutamine amidotransferase) binds and cleaves glutamine to supply the large subunit with the substrate ammonia. The chain is Carbamoyl phosphate synthase arginine-specific small chain (CPA1) from Chaetomium globosum (strain ATCC 6205 / CBS 148.51 / DSM 1962 / NBRC 6347 / NRRL 1970) (Soil fungus).